A 212-amino-acid chain; its full sequence is Ribonuclease HII (212 aa).

An RNase H type-2 domain is found at 17–206 (RVIAGVDEAG…KSTKPQSLQT (190 aa)). Residues Asp-23, Glu-24, and Asp-115 each contribute to the a divalent metal cation site.

This sequence belongs to the RNase HII family. Mn(2+) serves as cofactor. The cofactor is Mg(2+).

The protein localises to the cytoplasm. It catalyses the reaction Endonucleolytic cleavage to 5'-phosphomonoester.. Its function is as follows. Endonuclease that specifically degrades the RNA of RNA-DNA hybrids. In Syntrophus aciditrophicus (strain SB), this protein is Ribonuclease HII.